Here is a 459-residue protein sequence, read N- to C-terminus: Methylenetetrahydrofolate--tRNA-(uracil-5-)-methyltransferase TrmFO (459 aa).

26–31 (GGGLAG) provides a ligand contact to FAD.

It belongs to the MnmG family. TrmFO subfamily. FAD serves as cofactor.

Its subcellular location is the cytoplasm. It carries out the reaction uridine(54) in tRNA + (6R)-5,10-methylene-5,6,7,8-tetrahydrofolate + NADH + H(+) = 5-methyluridine(54) in tRNA + (6S)-5,6,7,8-tetrahydrofolate + NAD(+). It catalyses the reaction uridine(54) in tRNA + (6R)-5,10-methylene-5,6,7,8-tetrahydrofolate + NADPH + H(+) = 5-methyluridine(54) in tRNA + (6S)-5,6,7,8-tetrahydrofolate + NADP(+). Its function is as follows. Catalyzes the folate-dependent formation of 5-methyl-uridine at position 54 (M-5-U54) in all tRNAs. This chain is Methylenetetrahydrofolate--tRNA-(uracil-5-)-methyltransferase TrmFO, found in Synechococcus sp. (strain JA-2-3B'a(2-13)) (Cyanobacteria bacterium Yellowstone B-Prime).